A 123-amino-acid chain; its full sequence is Alpha-lactalbumin (123 aa).

Residues 1-123 (KQFTKCELSQ…KLEQWLCEEL (123 aa)) form the C-type lysozyme domain. 4 disulfide bridges follow: C6-C120, C28-C111, C61-C77, and C73-C91. Ca(2+)-binding residues include K79, D82, D84, D87, and D88.

The protein belongs to the glycosyl hydrolase 22 family. As to quaternary structure, lactose synthase (LS) is a heterodimer of a catalytic component, beta1,4-galactosyltransferase (beta4Gal-T1) and a regulatory component, alpha-lactalbumin (LA). As to expression, mammary gland specific. Secreted in milk.

It is found in the secreted. Its function is as follows. Regulatory subunit of lactose synthase, changes the substrate specificity of galactosyltransferase in the mammary gland making glucose a good acceptor substrate for this enzyme. This enables LS to synthesize lactose, the major carbohydrate component of milk. In other tissues, galactosyltransferase transfers galactose onto the N-acetylglucosamine of the oligosaccharide chains in glycoproteins. This chain is Alpha-lactalbumin (LALBA), found in Equus asinus (Donkey).